We begin with the raw amino-acid sequence, 201 residues long: B-cell CLL/lymphoma 7 protein family member B-B (201 aa).

Positions Gln104–Ser201 are disordered.

It belongs to the BCL7 family.

In Danio rerio (Zebrafish), this protein is B-cell CLL/lymphoma 7 protein family member B-B.